The following is an 80-amino-acid chain: Raniseptin-6 (80 aa).

Positions 1–22 are cleaved as a signal peptide; the sequence is MAFLKKSLFLVLFLGIVSLSIC. The propeptide occupies 23-49; that stretch reads EEEKREGEEEEKQEEENEELSEEELRE.

It belongs to the frog skin active peptide (FSAP) family. Dermaseptin subfamily. In terms of tissue distribution, expressed by the skin glands.

It localises to the secreted. Its function is as follows. Has antibacterial activity. The polypeptide is Raniseptin-6 (Boana raniceps (Chaco tree frog)).